We begin with the raw amino-acid sequence, 199 residues long: CASP-like protein 4B1 (199 aa).

A disordered region spans residues 1–32 (MAMVASPDDIVKSPLPPPPPPPPPPLPPAHKD). Topologically, residues 1-53 (MAMVASPDDIVKSPLPPPPPPPPPPLPPAHKDKAAYNPYSGCPAHGGDDGLDG) are cytoplasmic. The segment covering 14-28 (PLPPPPPPPPPPLPP) has biased composition (pro residues). Residues 54 to 74 (IVLVLRAAAALLALVAMALVA) form a helical membrane-spanning segment. The Extracellular segment spans residues 75 to 91 (SCRHGDWMEFTRYQEYR). Residues 92–112 (YLLGVAVVASLYSALQAARTF) traverse the membrane as a helical segment. The Cytoplasmic portion of the chain corresponds to 113-127 (RRMRAGTAYAATFLD). Residues 128–148 (FAGDQAVGYLLITASSAALPI) form a helical membrane-spanning segment. At 149-163 (TIRMRSAVVNTFTDV) the chain is on the extracellular side. The chain crosses the membrane as a helical span at residues 164–184 (VAASISFAFLAFAALAFSALI). Over 185–199 (AGFRLSSSSSSAYNY) the chain is Cytoplasmic.

It belongs to the Casparian strip membrane proteins (CASP) family. As to quaternary structure, homodimer and heterodimers.

It localises to the cell membrane. In Oryza sativa subsp. japonica (Rice), this protein is CASP-like protein 4B1.